The primary structure comprises 37 residues: Large ribosomal subunit protein bL36 (37 aa).

This sequence belongs to the bacterial ribosomal protein bL36 family.

The sequence is that of Large ribosomal subunit protein bL36 from Desulforapulum autotrophicum (strain ATCC 43914 / DSM 3382 / VKM B-1955 / HRM2) (Desulfobacterium autotrophicum).